The primary structure comprises 93 residues: Small ribosomal subunit protein uS19 (93 aa).

The protein belongs to the universal ribosomal protein uS19 family.

In terms of biological role, protein S19 forms a complex with S13 that binds strongly to the 16S ribosomal RNA. This is Small ribosomal subunit protein uS19 from Dehalococcoides mccartyi (strain ATCC BAA-2266 / KCTC 15142 / 195) (Dehalococcoides ethenogenes (strain 195)).